The primary structure comprises 335 residues: Heat-inducible transcription repressor HrcA (335 aa).

This sequence belongs to the HrcA family.

Functionally, negative regulator of class I heat shock genes (grpE-dnaK-dnaJ and groELS operons). Prevents heat-shock induction of these operons. The sequence is that of Heat-inducible transcription repressor HrcA from Mesomycoplasma hyopneumoniae (strain 232) (Mycoplasma hyopneumoniae).